The chain runs to 512 residues: Cytochrome P450 monooxygenase hkm5 (512 aa).

Residues 18-38 (LIQLVRALLWVLVITIGGAIV) traverse the membrane as a helical segment. N-linked (GlcNAc...) asparagine glycosylation is found at asparagine 184, asparagine 263, asparagine 275, asparagine 374, and asparagine 419. Cysteine 456 provides a ligand contact to heme.

Belongs to the cytochrome P450 family. Requires heme as cofactor.

Its subcellular location is the membrane. The enzyme catalyses hancockiamide A + reduced [NADPH--hemoprotein reductase] + O2 = hancockiamide G + oxidized [NADPH--hemoprotein reductase] + 2 H2O + H(+). The catalysed reaction is hancockiamide B + reduced [NADPH--hemoprotein reductase] + O2 = hancockiamide C + oxidized [NADPH--hemoprotein reductase] + 2 H2O + H(+). It carries out the reaction hancockiamide D + reduced [NADPH--hemoprotein reductase] + O2 = hancockiamide H + oxidized [NADPH--hemoprotein reductase] + 2 H2O + H(+). It participates in secondary metabolite biosynthesis. Its function is as follows. Cytochrome P450 monooxygenase; part of the gene cluster that mediates the biosynthesis of hancockiamides, an unusual new family of N-cinnamoylated piperazines. The NRPS hkm10 and the NmrA-like reductase hkm9 are proposed to convert two molecules of L-Phe to the intermediary piperazine called xenocockiamide A. Xenocockiamide A is then converted to hancockiamide D via a series of hydroxylations and O-methylations. The tyrosinase hkm6 may catalyze an aromatic hydroxylation, then the 2-oxoglutarate-dependent Fe(II) dioxygenase hkm4 and the FAD-dependent phenol hydroxylase hkm7 may catalyze consecutive hydroxylations to install 2 more hydroxy groups, and the methyltransferase hkm8 probably catalyzes two methylations using 2 molecules of S-adenosyl-L-methionine (SAM). The NRPS hkm11 activates and transfers trans-cinnamate supplied by the PAL hkm12 to hancockiamide D and produces hancockiamide A. NRPS Hkm11 has the flexibility to tolerate the bulky hancockiamide G as a substrate and the absence of the acetyl-transferase hkm3 opens up the opportunity for hkm11 to introduce a second N-cinnamoyl moiety. The cytochrome P450 monooxygenase hkm5 catalyzes the methylenedioxy bridge formation, converting hancockiamide A into hancockiamide G. Hkm5 can also convert hancockiamide B into hancockiamide C, and hancockiamide D into hancockiamide H. The N-acetyltransferase hkm3 finally transfers an acetyl group to 1-N of piperazine, converting hancockiamide A into hancockiamide B and hancockiamide G into hancockiamide C. The chain is Cytochrome P450 monooxygenase hkm5 from Aspergillus hancockii.